The sequence spans 78 residues: U-scoloptoxin(13)-Er1a (78 aa).

Positions M1–A24 are cleaved as a signal peptide.

This sequence belongs to the scoloptoxin-13 family. Contains 4 disulfide bonds. In terms of tissue distribution, expressed by the venom gland.

The protein localises to the secreted. This chain is U-scoloptoxin(13)-Er1a, found in Ethmostigmus rubripes (Giant centipede).